Reading from the N-terminus, the 586-residue chain is Dolichyl-diphosphooligosaccharide--protein glycosyltransferase subunit 1 (586 aa).

Residues 1-15 (MRLLFAIALLGAVFA) form the signal peptide. Topologically, residues 16-421 (EDAWKAANVD…EFEFVDMLRE (406 aa)) are lumenal. The helical transmembrane segment at 422–442 (PLLASAFFFSLFFVIIVYSRF) threads the bilayer. The Cytoplasmic segment spans residues 443 to 586 (DFTISSDPAK…NRADSVLASI (144 aa)).

It belongs to the OST1 family. In terms of assembly, component of the oligosaccharyltransferase (OST) complex.

The protein resides in the endoplasmic reticulum membrane. Its subcellular location is the cytoplasmic granule. Its pathway is protein modification; protein glycosylation. In terms of biological role, subunit of the oligosaccharyl transferase (OST) complex that catalyzes the initial transfer of a defined glycan (Glc(3)Man(9)GlcNAc(2) in eukaryotes) from the lipid carrier dolichol-pyrophosphate to an asparagine residue within an Asn-X-Ser/Thr consensus motif in nascent polypeptide chains, the first step in protein N-glycosylation. N-glycosylation occurs cotranslationally and the complex associates with the Sec61 complex at the channel-forming translocon complex that mediates protein translocation across the endoplasmic reticulum (ER). All subunits are required for a maximal enzyme activity. The sequence is that of Dolichyl-diphosphooligosaccharide--protein glycosyltransferase subunit 1 from Caenorhabditis elegans.